The sequence spans 240 residues: tRNA1(Val) (adenine(37)-N6)-methyltransferase (240 aa).

This sequence belongs to the methyltransferase superfamily. tRNA (adenine-N(6)-)-methyltransferase family.

It is found in the cytoplasm. The catalysed reaction is adenosine(37) in tRNA1(Val) + S-adenosyl-L-methionine = N(6)-methyladenosine(37) in tRNA1(Val) + S-adenosyl-L-homocysteine + H(+). Its function is as follows. Specifically methylates the adenine in position 37 of tRNA(1)(Val) (anticodon cmo5UAC). This chain is tRNA1(Val) (adenine(37)-N6)-methyltransferase, found in Christiangramia forsetii (strain DSM 17595 / CGMCC 1.15422 / KT0803) (Gramella forsetii).